The primary structure comprises 236 residues: Phosphoribosylaminoimidazole-succinocarboxamide synthase (236 aa).

This sequence belongs to the SAICAR synthetase family.

The catalysed reaction is 5-amino-1-(5-phospho-D-ribosyl)imidazole-4-carboxylate + L-aspartate + ATP = (2S)-2-[5-amino-1-(5-phospho-beta-D-ribosyl)imidazole-4-carboxamido]succinate + ADP + phosphate + 2 H(+). It participates in purine metabolism; IMP biosynthesis via de novo pathway; 5-amino-1-(5-phospho-D-ribosyl)imidazole-4-carboxamide from 5-amino-1-(5-phospho-D-ribosyl)imidazole-4-carboxylate: step 1/2. This Rickettsia massiliae (strain Mtu5) protein is Phosphoribosylaminoimidazole-succinocarboxamide synthase.